The primary structure comprises 119 residues: Large ribosomal subunit protein bL20 (119 aa).

Belongs to the bacterial ribosomal protein bL20 family.

Its function is as follows. Binds directly to 23S ribosomal RNA and is necessary for the in vitro assembly process of the 50S ribosomal subunit. It is not involved in the protein synthesizing functions of that subunit. This is Large ribosomal subunit protein bL20 from Nitrobacter hamburgensis (strain DSM 10229 / NCIMB 13809 / X14).